Reading from the N-terminus, the 332-residue chain is Monoterpene synthase 25 (332 aa).

Aspartate 115, glutamate 180, asparagine 240, serine 244, and glutamate 248 together coordinate Mg(2+). The short motif at aspartate 115 to aspartate 121 is the DDXXXXD motif element. An NSE/DTE motif motif is present at residues asparagine 240–glutamate 248.

This sequence belongs to the trichodiene synthase family. Mg(2+) is required as a cofactor.

In terms of biological role, terpene cyclase that catalyzes the cyclization of geranyl diphosphate (GPP) to myrcene and linalool. The protein is Monoterpene synthase 25 of Postia placenta (strain ATCC 44394 / Madison 698-R) (Brown rot fungus).